A 229-amino-acid chain; its full sequence is Uracil-DNA glycosylase (229 aa).

D64 functions as the Proton acceptor in the catalytic mechanism.

The protein belongs to the uracil-DNA glycosylase (UDG) superfamily. UNG family.

The protein resides in the cytoplasm. The enzyme catalyses Hydrolyzes single-stranded DNA or mismatched double-stranded DNA and polynucleotides, releasing free uracil.. Excises uracil residues from the DNA which can arise as a result of misincorporation of dUMP residues by DNA polymerase or due to deamination of cytosine. This chain is Uracil-DNA glycosylase, found in Escherichia coli O81 (strain ED1a).